The primary structure comprises 466 residues: 3-isopropylmalate dehydratase large subunit (466 aa).

Residues cysteine 347, cysteine 407, and cysteine 410 each coordinate [4Fe-4S] cluster.

The protein belongs to the aconitase/IPM isomerase family. LeuC type 1 subfamily. In terms of assembly, heterodimer of LeuC and LeuD. [4Fe-4S] cluster is required as a cofactor.

It catalyses the reaction (2R,3S)-3-isopropylmalate = (2S)-2-isopropylmalate. Its pathway is amino-acid biosynthesis; L-leucine biosynthesis; L-leucine from 3-methyl-2-oxobutanoate: step 2/4. Its function is as follows. Catalyzes the isomerization between 2-isopropylmalate and 3-isopropylmalate, via the formation of 2-isopropylmaleate. This is 3-isopropylmalate dehydratase large subunit from Buchnera aphidicola subsp. Thelaxes suberi.